The primary structure comprises 105 residues: Large ribosomal subunit protein uL24 (105 aa).

It belongs to the universal ribosomal protein uL24 family. In terms of assembly, part of the 50S ribosomal subunit.

Its function is as follows. One of two assembly initiator proteins, it binds directly to the 5'-end of the 23S rRNA, where it nucleates assembly of the 50S subunit. In terms of biological role, one of the proteins that surrounds the polypeptide exit tunnel on the outside of the subunit. This Methylococcus capsulatus (strain ATCC 33009 / NCIMB 11132 / Bath) protein is Large ribosomal subunit protein uL24.